The following is a 411-amino-acid chain: Tyrosine--tRNA ligase (411 aa).

Tyr-36 lines the L-tyrosine pocket. Positions 41–50 (PTADSLHVGH) match the 'HIGH' region motif. The L-tyrosine site is built by Tyr-172 and Gln-176. Positions 232–236 (KMGKT) match the 'KMSKS' region motif. Lys-235 is a binding site for ATP. The 66-residue stretch at 344–409 (YSIANILVVT…GKKNHIKVII (66 aa)) folds into the S4 RNA-binding domain.

It belongs to the class-I aminoacyl-tRNA synthetase family. TyrS type 1 subfamily. As to quaternary structure, homodimer.

It localises to the cytoplasm. The catalysed reaction is tRNA(Tyr) + L-tyrosine + ATP = L-tyrosyl-tRNA(Tyr) + AMP + diphosphate + H(+). Its function is as follows. Catalyzes the attachment of tyrosine to tRNA(Tyr) in a two-step reaction: tyrosine is first activated by ATP to form Tyr-AMP and then transferred to the acceptor end of tRNA(Tyr). The polypeptide is Tyrosine--tRNA ligase (Malacoplasma penetrans (strain HF-2) (Mycoplasma penetrans)).